A 732-amino-acid polypeptide reads, in one-letter code: Phosphoribosylformylglycinamidine synthase subunit PurL (732 aa).

Residue His42 is part of the active site. ATP is bound by residues Tyr45 and Lys84. Mg(2+) is bound at residue Glu86. Substrate contacts are provided by residues 87 to 90 (SHNH) and Arg109. The active-site Proton acceptor is His88. Asp110 lines the Mg(2+) pocket. Substrate is bound at residue Gln238. Asp266 provides a ligand contact to Mg(2+). 310–312 (ESQ) provides a ligand contact to substrate. The ATP site is built by Asp496 and Gly533. Position 534 (Asn534) interacts with Mg(2+). Position 536 (Ser536) interacts with substrate.

The protein belongs to the FGAMS family. In terms of assembly, monomer. Part of the FGAM synthase complex composed of 1 PurL, 1 PurQ and 2 PurS subunits.

The protein localises to the cytoplasm. It catalyses the reaction N(2)-formyl-N(1)-(5-phospho-beta-D-ribosyl)glycinamide + L-glutamine + ATP + H2O = 2-formamido-N(1)-(5-O-phospho-beta-D-ribosyl)acetamidine + L-glutamate + ADP + phosphate + H(+). It participates in purine metabolism; IMP biosynthesis via de novo pathway; 5-amino-1-(5-phospho-D-ribosyl)imidazole from N(2)-formyl-N(1)-(5-phospho-D-ribosyl)glycinamide: step 1/2. Its function is as follows. Part of the phosphoribosylformylglycinamidine synthase complex involved in the purines biosynthetic pathway. Catalyzes the ATP-dependent conversion of formylglycinamide ribonucleotide (FGAR) and glutamine to yield formylglycinamidine ribonucleotide (FGAM) and glutamate. The FGAM synthase complex is composed of three subunits. PurQ produces an ammonia molecule by converting glutamine to glutamate. PurL transfers the ammonia molecule to FGAR to form FGAM in an ATP-dependent manner. PurS interacts with PurQ and PurL and is thought to assist in the transfer of the ammonia molecule from PurQ to PurL. This chain is Phosphoribosylformylglycinamidine synthase subunit PurL, found in Campylobacter hominis (strain ATCC BAA-381 / DSM 21671 / CCUG 45161 / LMG 19568 / NCTC 13146 / CH001A).